The following is a 283-amino-acid chain: Protein FAM170B (283 aa).

Residues 1–11 are compositionally biased toward basic and acidic residues; it reads MKCYFTDHRGE. 2 disordered regions span residues 1-58 and 246-283; these read MKCY…REEG and AQGQ…QEKQ.

This sequence belongs to the FAM170 family. Interacts with GOPC. In terms of tissue distribution, exclusively expressed in adult testis.

Its subcellular location is the cytoplasmic vesicle. It is found in the secretory vesicle. The protein localises to the acrosome. It localises to the acrosome outer membrane. Its function is as follows. Plays a role in fertilization through the acrosome reaction. The polypeptide is Protein FAM170B (Homo sapiens (Human)).